A 207-amino-acid chain; its full sequence is Cytidylate kinase (207 aa).

7–15 (GVAASGKSS) serves as a coordination point for ATP.

The protein belongs to the cytidylate kinase family. Type 1 subfamily.

It localises to the cytoplasm. It carries out the reaction CMP + ATP = CDP + ADP. The enzyme catalyses dCMP + ATP = dCDP + ADP. This is Cytidylate kinase from Deinococcus deserti (strain DSM 17065 / CIP 109153 / LMG 22923 / VCD115).